The chain runs to 205 residues: Guanylate kinase (205 aa).

A Guanylate kinase-like domain is found at 5-184 (GLLIVLSGPS…AVQKIKGIVE (180 aa)). 12–19 (GPSGVGKG) contributes to the ATP binding site.

The protein belongs to the guanylate kinase family.

It localises to the cytoplasm. It carries out the reaction GMP + ATP = GDP + ADP. Functionally, essential for recycling GMP and indirectly, cGMP. The protein is Guanylate kinase of Listeria innocua serovar 6a (strain ATCC BAA-680 / CLIP 11262).